The chain runs to 132 residues: Small ribosomal subunit protein uS8c (132 aa).

The protein belongs to the universal ribosomal protein uS8 family. As to quaternary structure, part of the 30S ribosomal subunit.

The protein localises to the plastid. It localises to the chloroplast. One of the primary rRNA binding proteins, it binds directly to 16S rRNA central domain where it helps coordinate assembly of the platform of the 30S subunit. The polypeptide is Small ribosomal subunit protein uS8c (rps8) (Drimys granadensis).